We begin with the raw amino-acid sequence, 496 residues long: Glycerol kinase (496 aa).

Residue threonine 12 participates in ADP binding. ATP-binding residues include threonine 12, threonine 13, and serine 14. Threonine 12 is a binding site for sn-glycerol 3-phosphate. Residue arginine 16 coordinates ADP. The sn-glycerol 3-phosphate site is built by arginine 82, glutamate 83, and tyrosine 134. Residues arginine 82, glutamate 83, and tyrosine 134 each coordinate glycerol. Histidine 230 bears the Phosphohistidine; by HPr mark. Residue aspartate 244 coordinates sn-glycerol 3-phosphate. Residues aspartate 244 and glutamine 245 each coordinate glycerol. Residues threonine 266 and glycine 309 each contribute to the ADP site. The ATP site is built by threonine 266, glycine 309, glutamine 313, and glycine 410. Residues glycine 410 and asparagine 414 each coordinate ADP.

It belongs to the FGGY kinase family. As to quaternary structure, homotetramer and homodimer (in equilibrium). The phosphoenolpyruvate-dependent sugar phosphotransferase system (PTS), including enzyme I, and histidine-containing protein (HPr) are required for the phosphorylation, which leads to the activation of the enzyme.

The catalysed reaction is glycerol + ATP = sn-glycerol 3-phosphate + ADP + H(+). It participates in polyol metabolism; glycerol degradation via glycerol kinase pathway; sn-glycerol 3-phosphate from glycerol: step 1/1. Its activity is regulated as follows. Activated by phosphorylation and inhibited by fructose 1,6-bisphosphate (FBP). Its function is as follows. Key enzyme in the regulation of glycerol uptake and metabolism. Catalyzes the phosphorylation of glycerol to yield sn-glycerol 3-phosphate. In Bacillus cereus (strain G9842), this protein is Glycerol kinase.